The primary structure comprises 159 residues: 3-hydroxyacyl-[acyl-carrier-protein] dehydratase FabZ (159 aa).

His58 is an active-site residue.

This sequence belongs to the thioester dehydratase family. FabZ subfamily.

The protein resides in the cytoplasm. The enzyme catalyses a (3R)-hydroxyacyl-[ACP] = a (2E)-enoyl-[ACP] + H2O. Functionally, involved in unsaturated fatty acids biosynthesis. Catalyzes the dehydration of short chain beta-hydroxyacyl-ACPs and long chain saturated and unsaturated beta-hydroxyacyl-ACPs. This chain is 3-hydroxyacyl-[acyl-carrier-protein] dehydratase FabZ, found in Helicobacter pylori (strain P12).